A 427-amino-acid chain; its full sequence is POU domain protein CF1A (427 aa).

Disordered stretches follow at residues 39–77 (YMQH…GLGS), 196–217 (HHHM…TPTS), 288–309 (TTGS…KKRT), and 390–427 (HDMH…LAAH). A compositionally biased stretch (low complexity) spans 49–66 (AAAAAAHHQLPSSPSPNG). Positions 67 to 77 (QGNGGGLGLGS) are enriched in gly residues. One can recognise a POU-specific domain in the interval 212–286 (EDTPTSDDLE…LLQKWLEEAD (75 aa)). Residues 304–363 (KRKKRTSIEVSVKGALEQHFHKQPKPSAQEITSLADSLQLEKEVVRVWFCNRRQKEKRMT) constitute a DNA-binding region (homeobox).

This sequence belongs to the POU transcription factor family. Class-3 subfamily. As to expression, coexpressed with acj6 in overlapping subsets of neurons in the embryonic epidermis and central nervous system. First detected in the precursor of the tracheal pits and the stomodeal invagination and later in the peripheral nervous system.

The protein resides in the nucleus. Binds to a DNA sequence element required for the expression of the dopa decarboxylase gene (Ddc) in specific dopaminergic neurons. Could also play an early role in specific ectodermal cells, and a subsequent role in the embryonic nervous system. The polypeptide is POU domain protein CF1A (vvl) (Drosophila melanogaster (Fruit fly)).